We begin with the raw amino-acid sequence, 81 residues long: Cortexin-2 (81 aa).

Residues Thr29–Phe49 traverse the membrane as a helical segment.

Belongs to the cortexin family.

Its subcellular location is the membrane. The polypeptide is Cortexin-2 (CTXN2) (Homo sapiens (Human)).